Reading from the N-terminus, the 122-residue chain is Fluoride-specific ion channel FluC (122 aa).

The next 4 helical transmembrane spans lie at 1 to 21 (MYAF…RHYL), 35 to 55 (WAIL…SAYL), 67 to 87 (FLLT…LNLI), and 98 to 118 (FLNL…GFWL). Na(+)-binding residues include Gly-74 and Thr-77.

Belongs to the fluoride channel Fluc/FEX (TC 1.A.43) family.

Its subcellular location is the cell inner membrane. It carries out the reaction fluoride(in) = fluoride(out). With respect to regulation, na(+) is not transported, but it plays an essential structural role and its presence is essential for fluoride channel function. Functionally, fluoride-specific ion channel. Important for reducing fluoride concentration in the cell, thus reducing its toxicity. The chain is Fluoride-specific ion channel FluC from Dichelobacter nodosus (strain VCS1703A).